Consider the following 560-residue polypeptide: NAD-dependent malic enzyme (560 aa).

The active-site Proton donor is Tyr-100. NAD(+) is bound at residue Arg-153. The active-site Proton acceptor is Lys-171. Residues Glu-242, Asp-243, and Asp-266 each coordinate a divalent metal cation. The NAD(+) site is built by Asp-266 and Asn-413.

This sequence belongs to the malic enzymes family. In terms of assembly, homotetramer. Requires Mg(2+) as cofactor. It depends on Mn(2+) as a cofactor.

It carries out the reaction (S)-malate + NAD(+) = pyruvate + CO2 + NADH. The enzyme catalyses oxaloacetate + H(+) = pyruvate + CO2. This is NAD-dependent malic enzyme from Psychromonas ingrahamii (strain DSM 17664 / CCUG 51855 / 37).